Here is a 524-residue protein sequence, read N- to C-terminus: Calcium-dependent protein kinase 1 (524 aa).

Residues 1 to 34 are disordered; that stretch reads MGCSQSSNVKDFKTRRSKFTNGNNYGKSGNNKNS. Residue Gly-2 is the site of N-myristoyl glycine attachment. A lipid anchor (S-palmitoyl cysteine) is attached at Cys-3. The Basic cluster involved in membrane binding signature appears at 10-20; it reads KDFKTRRSKFT. Residues Ser-17, Ser-28, and Ser-34 each carry the phosphoserine; by autocatalysis modification. The segment covering 21–32 has biased composition (low complexity); the sequence is NGNNYGKSGNNK. The region spanning 56–325 is the Protein kinase domain; sequence YFKVRKLGSG…AKEALNSKWI (270 aa). ATP-binding positions include 62-70 and Lys-85; that span reads LGSGAYGEV. Residue Ser-64 is modified to Phosphoserine; by PKG; by autocatalysis. A Phosphothreonine; by autocatalysis modification is found at Thr-100. The residue at position 118 (Ser-118) is a Phosphoserine; by autocatalysis. Asp-191 functions as the Proton acceptor in the catalytic mechanism. A Phosphoserine modification is found at Ser-217. Ser-220 carries the post-translational modification Phosphoserine; by autocatalysis. At Thr-231 the chain carries Phosphothreonine; by PKG; by autocatalysis. At Ser-335 the chain carries Phosphoserine; by autocatalysis. Positions 346 to 353 match the J domain autoinhibitory motif motif; the sequence is NMRKFEGS. Residues 346-364 are j domain; sequence NMRKFEGSQKLAQAAILFI. A J domain interacts with the EF-hand domains motif is present at residues 354-364; sequence QKLAQAAILFI. EF-hand domains are found at residues 372 to 407, 416 to 451, 452 to 487, and 488 to 521; these read EERKELTDIFKKLDKNGDGQLDKKELIEGYNILRSF, NVEEEVDNILKEVDFDKNGYIEYSEFISVCMDKQIL, FSEERLRDAFNLFDTDKSGKITKEELANLFGLTSIS, and EQMWNEVLGEADKNKDNMIDFDEFVNMMHKICDN. Ca(2+) is bound by residues Asp-385, Asn-387, Asp-389, Gln-391, Glu-396, Asp-429, Asp-431, Asn-433, Tyr-435, Glu-440, Asp-465, Asp-467, Ser-469, Lys-471, Glu-476, Asp-499, Asn-501, Asp-503, Met-505, and Glu-510.

The protein belongs to the protein kinase superfamily. Ser/Thr protein kinase family. CDPK subfamily. In terms of assembly, monomer. Forms a high molecular weight (250 and 400 kDa) complex. Forms a complex composed of CDPK1, PKA regulatory subunit PKAr and 14-3-3I; the complex is formed in merozoites in response to low extracellular level of K(+) and may play a role in microneme secretion. Interacts (when phosphorylated) with 14-3-3I in a Ca(2+)-independent manner; the interaction does not regulate CDPK1 catalytic activity but is required for merozoite invasion of host erythrocytes. Interacts with PKA regulatory subunit PKAr; in a Ca(2+)-dependent manner. Interacts with SERA5 p50 in the late schizont stage. Interacts with inner membrane complex protein IMC1g in late schizonts. Interacts with rhoptry protein RhopH3 in merozoites. Requires Mg(2+) as cofactor. Post-translationally, myristoylated. Myristoylation, palmitoylation and the basic cluster motif are required for the localization to the parasitophorous vacuole membrane. In terms of processing, palmitoylated. Palmitoylation increases in merozoites in response to low level of extracellular K(+) in the host blood. Myristoylation, palmitoylation and the basic cluster motif are required for the localization to the parasitophorous vacuole membrane. Phosphorylation at Ser-64 occurs at late schizont stage and regulates CDPK1 protein-protein interaction. Phosphorylated at Ser-28, Ser-34 and Ser-64 in merozoites in response to low extracellular level of K(+). Phosphorylation at Thr-231 may regulate CDPK1 kinase activity. Phosphorylation increases in response to an increase in intracellular Ca(2+) levels. Autophosphorylated in vitro. Autophosphorylation does not affect membrane localization in vitro.

Its subcellular location is the membrane. It is found in the cell membrane. The protein localises to the parasitophorous vacuole membrane. It localises to the cytoplasm. The protein resides in the cell projection. Its subcellular location is the cilium. It is found in the flagellum. The protein localises to the host cell membrane. It carries out the reaction L-seryl-[protein] + ATP = O-phospho-L-seryl-[protein] + ADP + H(+). It catalyses the reaction L-threonyl-[protein] + ATP = O-phospho-L-threonyl-[protein] + ADP + H(+). With respect to regulation, activated by calcium. Upon calcium binding to the EF-hand domains, the C-terminus of the junction domain (J domain) undergoes a conformational change which results in the dissociation of the pseudo-substrate inhibitory motif from the catalytic domain. This, in turn may facilitate the autophosphorylation of the activation loop at Thr-231, which leads to the kinase activation. May be negatively regulated by PKA-mediated phosphorylation. Inhibited by purfalcamine. Its function is as follows. Calcium-dependent protein kinase which acts as a sensor and effector of intracellular Ca(2+) levels probably in part downstream of cGMP-activated PKG kinase. By phosphorylating various proteins, required for microneme secretion and thus merozoite egress from and invasion of host erythrocytes. During gametogenesis, essential for the development of both male and female gametes. Phosphorylates SERA5 p50 which enhances SERA5 p50 protease activity; however, SERA5 p50 protease activity has been shown in other studies to be controversial. Probably by phosphorylating SERA5 p50, plays a role in merozoite egress from host erythrocytes. Probably prior or during merozoite invasion of host erythrocytes, phosphorylates rhoptry protein RhopH3 which is required for RhopH3 localization to rhoptries and for its secretion. Probably in late schizonts, phosphorylates myosin A tail domain-interacting protein MTIP and glideosome-associated protein 45 GAP45, both of which are components of the motor complex that generates the force required by the parasite to invade host cells. In late schizonts, phosphorylates inner membrane complex protein IMC1g. In late schizonts, phosphorylates PKA regulatory subunit PKAr in a calcium-dependent manner, which may contribute to the dissociation of regulatory PKAr and catalytic PKAc subunits and promote the activation of PKAc. May phosphorylate raf kinase inhibitory protein RKIP which in turn may regulate CDPK1 catalytic activity. May phosphorylate proteins of the host erythrocyte membranes. This chain is Calcium-dependent protein kinase 1, found in Plasmodium falciparum (isolate 3D7).